The sequence spans 123 residues: MRIQSLLLLGALLAVGSQLPAVFGRKKGEKWGGCPADDGPCLLSVPDQCVEDSQCPLTRKCCYRACFRQCVPRVSVKPGSCPQDQLRCLSPVNHQCHKDSDCSGKKRCCHSACGRDCRDPARG.

The signal sequence occupies residues 1–24 (MRIQSLLLLGALLAVGSQLPAVFG). 2 WAP domains span residues 27–73 (KGEK…CVPR) and 74–121 (VSVK…RDPA). 8 disulfides stabilise this stretch: cysteine 34-cysteine 62, cysteine 41-cysteine 66, cysteine 49-cysteine 61, cysteine 55-cysteine 70, cysteine 81-cysteine 109, cysteine 88-cysteine 113, cysteine 96-cysteine 108, and cysteine 102-cysteine 117.

It localises to the secreted. In terms of biological role, putative acid-stable proteinase inhibitor. The sequence is that of WAP four-disulfide core domain protein 5 (WFDC5) from Chlorocebus aethiops (Green monkey).